The sequence spans 572 residues: Nucleolin 1 (572 aa).

Disordered regions lie at residues 1-312 (MGKA…ESAT) and 488-572 (DEAK…FGDE). Low complexity predominate over residues 7–21 (KSVAVAVAPAAVPAK). Positions 27-38 (KREAEDEIEKAV) are enriched in basic and acidic residues. Composition is skewed to low complexity over residues 45–58 (AAAA…PAPK) and 72–81 (KAASSSSGSS). Acidic residues-rich tracts occupy residues 82-91 (SEEDSSESEE), 109-122 (SSDE…DDED), 144-156 (SESD…DEDE), 177-191 (DSSE…SDED), 208-222 (STDG…EDED), 235-247 (SDEE…ESSD), and 261-276 (ESSE…EEDE). The span at 300–311 (PASNQSQGTESA) shows a compositional bias: polar residues. 2 consecutive RRM domains span residues 311–387 (ATLF…LAHE) and 411–492 (QSIF…EAKP). 2 stretches are compositionally biased toward basic and acidic residues: residues 488-520 (DEAK…DRFG) and 528-545 (GGRD…DGGR). The span at 553 to 566 (QSRQSAGTASTGKK) shows a compositional bias: polar residues.

The protein localises to the nucleus. The protein resides in the nucleolus. In terms of biological role, involved in pre-rRNA processing and ribosome assembly. The protein is Nucleolin 1 of Oryza sativa subsp. japonica (Rice).